We begin with the raw amino-acid sequence, 298 residues long: Ketohexokinase (298 aa).

The beta-D-fructose site is built by Asp15, Gly41, Asn42, and Asn45. ATP contacts are provided by residues Arg108, 226–229 (AEEG), and 255–258 (GAGD). Residue Asp258 participates in beta-D-fructose binding.

The protein belongs to the carbohydrate kinase PfkB family. As to quaternary structure, homodimer. In terms of tissue distribution, most abundant in liver, kidney, gut, spleen and pancreas. Low levels also found in adrenal, muscle, brain and eye.

It carries out the reaction beta-D-fructose + ATP = beta-D-fructose 1-phosphate + ADP + H(+). It participates in carbohydrate metabolism; fructose metabolism. Its activity is regulated as follows. Requires potassium. Inhibition by ADP. In terms of biological role, catalyzes the phosphorylation of the ketose sugar fructose to fructose-1-phosphate. This chain is Ketohexokinase, found in Homo sapiens (Human).